The chain runs to 80 residues: Exodeoxyribonuclease 7 small subunit (80 aa).

It belongs to the XseB family. As to quaternary structure, heterooligomer composed of large and small subunits.

It localises to the cytoplasm. The enzyme catalyses Exonucleolytic cleavage in either 5'- to 3'- or 3'- to 5'-direction to yield nucleoside 5'-phosphates.. Functionally, bidirectionally degrades single-stranded DNA into large acid-insoluble oligonucleotides, which are then degraded further into small acid-soluble oligonucleotides. In Pseudomonas aeruginosa (strain LESB58), this protein is Exodeoxyribonuclease 7 small subunit.